Reading from the N-terminus, the 562-residue chain is Dihydroxy-acid dehydratase (562 aa).

A [2Fe-2S] cluster-binding site is contributed by Cys55. Asp87 is a binding site for Mg(2+). Cys128 contacts [2Fe-2S] cluster. Mg(2+) is bound by residues Asp129 and Lys130. At Lys130 the chain carries N6-carboxylysine. Cys200 provides a ligand contact to [2Fe-2S] cluster. Position 451 (Glu451) interacts with Mg(2+). Ser477 serves as the catalytic Proton acceptor.

The protein belongs to the IlvD/Edd family. As to quaternary structure, homodimer. It depends on [2Fe-2S] cluster as a cofactor. Requires Mg(2+) as cofactor.

It carries out the reaction (2R)-2,3-dihydroxy-3-methylbutanoate = 3-methyl-2-oxobutanoate + H2O. The enzyme catalyses (2R,3R)-2,3-dihydroxy-3-methylpentanoate = (S)-3-methyl-2-oxopentanoate + H2O. Its pathway is amino-acid biosynthesis; L-isoleucine biosynthesis; L-isoleucine from 2-oxobutanoate: step 3/4. It participates in amino-acid biosynthesis; L-valine biosynthesis; L-valine from pyruvate: step 3/4. In terms of biological role, functions in the biosynthesis of branched-chain amino acids. Catalyzes the dehydration of (2R,3R)-2,3-dihydroxy-3-methylpentanoate (2,3-dihydroxy-3-methylvalerate) into 2-oxo-3-methylpentanoate (2-oxo-3-methylvalerate) and of (2R)-2,3-dihydroxy-3-methylbutanoate (2,3-dihydroxyisovalerate) into 2-oxo-3-methylbutanoate (2-oxoisovalerate), the penultimate precursor to L-isoleucine and L-valine, respectively. The chain is Dihydroxy-acid dehydratase from Cytophaga hutchinsonii (strain ATCC 33406 / DSM 1761 / CIP 103989 / NBRC 15051 / NCIMB 9469 / D465).